The following is a 114-amino-acid chain: Probable non-functional T cell receptor beta variable 6-7 (114 aa).

The N-terminal stretch at 1–21 (MSLGLLCCVAFSLLWAGPMNA) is a signal peptide. The 93-residue stretch at 22–114 (GVTQTPKFHV…TSVYFCASSY (93 aa)) folds into the Ig-like domain. Cysteine 42 and cysteine 110 form a disulfide bridge. Asparagine 84 carries N-linked (GlcNAc...) asparagine glycosylation.

Alpha-beta TR is a heterodimer composed of an alpha and beta chain; disulfide-linked. The alpha-beta TR is associated with the transmembrane signaling CD3 coreceptor proteins to form the TR-CD3 (TcR or TCR). The assembly of alpha-beta TR heterodimers with CD3 occurs in the endoplasmic reticulum where a single alpha-beta TR heterodimer associates with one CD3D-CD3E heterodimer, one CD3G-CD3E heterodimer and one CD247 homodimer forming a stable octameric structure. CD3D-CD3E and CD3G-CD3E heterodimers preferentially associate with TR alpha and TR beta chains, respectively. The association of the CD247 homodimer is the last step of TcR assembly in the endoplasmic reticulum and is required for transport to the cell surface.

It is found in the cell membrane. Probable non-functional open reading frame (ORF) of V region of the variable domain of T cell receptor (TR) beta chain. Non-functional ORF generally cannot participate in the synthesis of a productive T cell receptor (TR) chain due to altered V-(D)-J or switch recombination and/or splicing site (at mRNA level) and/or conserved amino acid change (protein level). Alpha-beta T cell receptors are antigen specific receptors which are essential to the immune response and are present on the cell surface of T lymphocytes. Recognize peptide-major histocompatibility (MH) (pMH) complexes that are displayed by antigen presenting cells (APC), a prerequisite for efficient T cell adaptive immunity against pathogens. Binding of alpha-beta TR to pMH complex initiates TR-CD3 clustering on the cell surface and intracellular activation of LCK that phosphorylates the ITAM motifs of CD3G, CD3D, CD3E and CD247 enabling the recruitment of ZAP70. In turn ZAP70 phosphorylates LAT, which recruits numerous signaling molecules to form the LAT signalosome. The LAT signalosome propagates signal branching to three major signaling pathways, the calcium, the mitogen-activated protein kinase (MAPK) kinase and the nuclear factor NF-kappa-B (NF-kB) pathways, leading to the mobilization of transcription factors that are critical for gene expression and essential for T cell growth and differentiation. The T cell repertoire is generated in the thymus, by V-(D)-J rearrangement. This repertoire is then shaped by intrathymic selection events to generate a peripheral T cell pool of self-MH restricted, non-autoaggressive T cells. Post-thymic interaction of alpha-beta TR with the pMH complexes shapes TR structural and functional avidity. This chain is Probable non-functional T cell receptor beta variable 6-7, found in Homo sapiens (Human).